The following is a 404-amino-acid chain: MARRLSILKQPIFSTFNNHLIDYPTPSNISYWWGFGSLAGLCLVIQILTGVFLAMHYTPHVDLAFLSVEHIMRDVKGGWLLRYMHANGASMFFIVVYLHFFRGLYYGSYASPRELVWCLGVVILLLMIVTAFIGYVLPWGQMSFWGATVITSLASAIPVVGDTIVTWLWGGFSVDNATLNRFFSLHYLLPFIIAGASILHLAALHQYGSNNPLGINSSVDKIAFYPYIYVKDLVGWVAFAIFFSIFVFYAPNVLGHPDNYIPANPMSTPAHIVPEWYFLPVYAILRSIPNKLGGVAAIGLVFVSLLALPFINTSYVRSSSFRPIHQKFFWLLVADCLLLGWIGCQPVEAPYVTIGQIASVGFFFYFAITPILGKCEARLIKNSNACEARSVLASFLTSIGLLWW.

The next 4 helical transmembrane spans lie at 35–55 (FGSL…FLAM), 79–101 (WLLR…LHFF), 116–136 (VWCL…IGYV), and 182–202 (FFSL…LHLA). Positions 85 and 99 each coordinate heme b. H186 and H200 together coordinate heme b. H205 is a binding site for a ubiquinone. Transmembrane regions (helical) follow at residues 228–248 (IYVK…IFVF), 292–312 (LGGV…PFIN), 324–344 (IHQK…WIGC), and 351–370 (YVTI…AITP).

It belongs to the cytochrome b family. As to quaternary structure, the main subunits of complex b-c1 are: cytochrome b, cytochrome c1 and the Rieske protein. It depends on heme b as a cofactor.

Its subcellular location is the mitochondrion inner membrane. Its function is as follows. Component of the ubiquinol-cytochrome c reductase complex (complex III or cytochrome b-c1 complex) that is part of the mitochondrial respiratory chain. The b-c1 complex mediates electron transfer from ubiquinol to cytochrome c. Contributes to the generation of a proton gradient across the mitochondrial membrane that is then used for ATP synthesis. The protein is Cytochrome b (MT-CYB) of Marchantia polymorpha (Common liverwort).